Reading from the N-terminus, the 486-residue chain is Protein nucleotidyltransferase YdiU (486 aa).

Residues Gly90, Gly92, Arg93, Lys113, Asp125, Gly126, Arg176, and Arg183 each coordinate ATP. Asp252 acts as the Proton acceptor in catalysis. The Mg(2+) site is built by Asn253 and Asp262. An ATP-binding site is contributed by Asp262.

Belongs to the SELO family. Mg(2+) serves as cofactor. It depends on Mn(2+) as a cofactor.

It catalyses the reaction L-seryl-[protein] + ATP = 3-O-(5'-adenylyl)-L-seryl-[protein] + diphosphate. The enzyme catalyses L-threonyl-[protein] + ATP = 3-O-(5'-adenylyl)-L-threonyl-[protein] + diphosphate. It carries out the reaction L-tyrosyl-[protein] + ATP = O-(5'-adenylyl)-L-tyrosyl-[protein] + diphosphate. The catalysed reaction is L-histidyl-[protein] + UTP = N(tele)-(5'-uridylyl)-L-histidyl-[protein] + diphosphate. It catalyses the reaction L-seryl-[protein] + UTP = O-(5'-uridylyl)-L-seryl-[protein] + diphosphate. The enzyme catalyses L-tyrosyl-[protein] + UTP = O-(5'-uridylyl)-L-tyrosyl-[protein] + diphosphate. Its function is as follows. Nucleotidyltransferase involved in the post-translational modification of proteins. It can catalyze the addition of adenosine monophosphate (AMP) or uridine monophosphate (UMP) to a protein, resulting in modifications known as AMPylation and UMPylation. This is Protein nucleotidyltransferase YdiU from Stutzerimonas stutzeri (strain A1501) (Pseudomonas stutzeri).